Reading from the N-terminus, the 252-residue chain is Chitooligosaccharide deacetylase (252 aa).

Histidine 61 and histidine 125 together coordinate Mg(2+).

Belongs to the YdjC deacetylase family. ChbG subfamily. In terms of assembly, homodimer. Requires Mg(2+) as cofactor.

It localises to the cytoplasm. The enzyme catalyses N,N'-diacetylchitobiose + H2O = N-acetyl-beta-D-glucosaminyl-(1-&gt;4)-D-glucosamine + acetate. It catalyses the reaction diacetylchitobiose-6'-phosphate + H2O = N'-monoacetylchitobiose-6'-phosphate + acetate. The protein operates within glycan degradation; chitin degradation. Its function is as follows. Involved in the degradation of chitin. ChbG is essential for growth on the acetylated chitooligosaccharides chitobiose and chitotriose but is dispensable for growth on cellobiose and chitosan dimer, the deacetylated form of chitobiose. Deacetylation of chitobiose-6-P and chitotriose-6-P is necessary for both the activation of the chb promoter by the regulatory protein ChbR and the hydrolysis of phosphorylated beta-glucosides by the phospho-beta-glucosidase ChbF. Catalyzes the removal of only one acetyl group from chitobiose-6-P to yield monoacetylchitobiose-6-P, the inducer of ChbR and the substrate of ChbF. The protein is Chitooligosaccharide deacetylase of Escherichia coli O127:H6 (strain E2348/69 / EPEC).